A 740-amino-acid polypeptide reads, in one-letter code: Phosphoribosylformylglycinamidine synthase subunit PurL (740 aa).

H54 is an active-site residue. Residues Y57 and K96 each contribute to the ATP site. A Mg(2+)-binding site is contributed by E98. Substrate contacts are provided by residues 99–102 and R121; that span reads SHNH. Residue H100 is the Proton acceptor of the active site. D122 lines the Mg(2+) pocket. Q245 lines the substrate pocket. Mg(2+) is bound at residue D273. 317–319 serves as a coordination point for substrate; sequence ESQ. ATP contacts are provided by D499 and G536. N537 contributes to the Mg(2+) binding site. Substrate is bound at residue S539.

It belongs to the FGAMS family. In terms of assembly, monomer. Part of the FGAM synthase complex composed of 1 PurL, 1 PurQ and 2 PurS subunits.

Its subcellular location is the cytoplasm. The catalysed reaction is N(2)-formyl-N(1)-(5-phospho-beta-D-ribosyl)glycinamide + L-glutamine + ATP + H2O = 2-formamido-N(1)-(5-O-phospho-beta-D-ribosyl)acetamidine + L-glutamate + ADP + phosphate + H(+). Its pathway is purine metabolism; IMP biosynthesis via de novo pathway; 5-amino-1-(5-phospho-D-ribosyl)imidazole from N(2)-formyl-N(1)-(5-phospho-D-ribosyl)glycinamide: step 1/2. Functionally, part of the phosphoribosylformylglycinamidine synthase complex involved in the purines biosynthetic pathway. Catalyzes the ATP-dependent conversion of formylglycinamide ribonucleotide (FGAR) and glutamine to yield formylglycinamidine ribonucleotide (FGAM) and glutamate. The FGAM synthase complex is composed of three subunits. PurQ produces an ammonia molecule by converting glutamine to glutamate. PurL transfers the ammonia molecule to FGAR to form FGAM in an ATP-dependent manner. PurS interacts with PurQ and PurL and is thought to assist in the transfer of the ammonia molecule from PurQ to PurL. The protein is Phosphoribosylformylglycinamidine synthase subunit PurL of Anoxybacillus flavithermus (strain DSM 21510 / WK1).